Consider the following 539-residue polypeptide: Beta-agarase A (539 aa).

The N-terminal stretch at 1–19 (MKKNYLLLYFIFLLCGSIA) is a signal peptide. A GH16 domain is found at 21 to 289 (QDWNGIPVPA…WIRVYKPVAV (269 aa)). Substrate-binding positions include Trp73, 82–92 (NAPQAWTNGSQ), 96–98 (QAQ), and Glu144. Residue Glu147 is the Nucleophile of the active site. Glu152 (proton donor) is an active-site residue. Substrate contacts are provided by Arg176 and Asp271. The segment at 332-353 (WANTNDIGSRDRGASNGRNNIN) is disordered.

This sequence belongs to the glycosyl hydrolase 16 family. Monomer. Proteolytically cleaved into mature beta-agarase A catalytic chain (AgaAc).

The protein resides in the secreted. The catalysed reaction is Hydrolysis of (1-&gt;4)-beta-D-galactosidic linkages in agarose, giving the tetramer as the predominant product.. Cleaves the beta-1,4-linkages between beta-D-galactose and alpha-L-3,6-anhydro-galactose residues in agarose. Cleaves agarose in a random manner with retention of the anomeric-bond configuration, producing beta-anomers that give rise progressively to alpha-anomers when mutarotation takes place. This chain is Beta-agarase A (agaA), found in Zobellia galactanivorans (strain DSM 12802 / CCUG 47099 / CIP 106680 / NCIMB 13871 / Dsij).